The chain runs to 319 residues: MamJ paralog LimJ (319 aa).

Disordered stretches follow at residues 1 to 59 and 145 to 176; these read MMME…PAPV and AAAPEPEPEPVPEPEPEPEPEAAHDHAATETE. Residues 30–52 show a composition bias toward low complexity; sequence AALAPAADAEIPASSAPEPAAPI. Residues 150 to 164 show a composition bias toward acidic residues; it reads PEPEPVPEPEPEPEP.

This sequence belongs to the magnetosome MamJ protein family.

The protein resides in the magnetosome. Regulates the dynamic behavior of MamK filaments; paralog MamJ also promotes MamK turnover. At least one other protein besides MamJ and LimJ is required for MamK turnover. Might connect magnetosomes to MamK filaments. This Paramagnetospirillum magneticum (strain ATCC 700264 / AMB-1) (Magnetospirillum magneticum) protein is MamJ paralog LimJ.